Reading from the N-terminus, the 343-residue chain is UDP-3-O-acylglucosamine N-acyltransferase (343 aa).

His-238 functions as the Proton acceptor in the catalytic mechanism.

Belongs to the transferase hexapeptide repeat family. LpxD subfamily. Homotrimer.

It carries out the reaction a UDP-3-O-[(3R)-3-hydroxyacyl]-alpha-D-glucosamine + a (3R)-hydroxyacyl-[ACP] = a UDP-2-N,3-O-bis[(3R)-3-hydroxyacyl]-alpha-D-glucosamine + holo-[ACP] + H(+). Its pathway is bacterial outer membrane biogenesis; LPS lipid A biosynthesis. Its function is as follows. Catalyzes the N-acylation of UDP-3-O-acylglucosamine using 3-hydroxyacyl-ACP as the acyl donor. Is involved in the biosynthesis of lipid A, a phosphorylated glycolipid that anchors the lipopolysaccharide to the outer membrane of the cell. The sequence is that of UDP-3-O-acylglucosamine N-acyltransferase from Marinomonas sp. (strain MWYL1).